The primary structure comprises 426 residues: Isocitrate dehydrogenase [NADP] (426 aa).

Positions 123, 125, 129, 139, and 162 each coordinate D-threo-isocitrate. Asp312 is a binding site for Mg(2+). Residues 344–350 (HGTAWDI), Asn357, and Lys404 contribute to the NADP(+) site.

This sequence belongs to the isocitrate and isopropylmalate dehydrogenases family. In terms of assembly, homodimer. It depends on Mg(2+) as a cofactor. Mn(2+) is required as a cofactor.

It carries out the reaction D-threo-isocitrate + NADP(+) = 2-oxoglutarate + CO2 + NADPH. Catalyzes the oxidative decarboxylation of isocitrate to 2-oxoglutarate and carbon dioxide with the concomitant reduction of NADP(+). The polypeptide is Isocitrate dehydrogenase [NADP] (icd) (Aquifex aeolicus (strain VF5)).